The following is a 198-amino-acid chain: Guanylate kinase (198 aa).

The Guanylate kinase-like domain maps to 4 to 186; the sequence is PRPVVLSGPS…AYATLKQALS (183 aa). 14 to 19 lines the ATP pocket; the sequence is GAGKST. 37–51 serves as a coordination point for substrate; sequence SHTTRNPRPGEEDGK. Active-site residues include Arg-44, Arg-137, and Arg-148. 171–172 lines the ATP pocket; that stretch reads ND.

It belongs to the guanylate kinase family. As to quaternary structure, monomer. Interacts with RD3. As to expression, widely expressed. In retina is expressed in inner segment, outer nuclear layer, outer plexiform layer, inner plexiform layer, and ganglion cell layer (at protein level).

It localises to the photoreceptor inner segment. Its subcellular location is the cytoplasm. The protein resides in the cytosol. It is found in the mitochondrion. The enzyme catalyses GMP + ATP = GDP + ADP. Its function is as follows. Catalyzes the phosphorylation of GMP to GDP. Essential enzyme for recycling GMP and indirectly, cyclic GMP (cGMP). Involved in the cGMP metabolism in photoreceptors. The protein is Guanylate kinase of Mus musculus (Mouse).